The sequence spans 340 residues: Phosphate acyltransferase (340 aa).

The protein belongs to the PlsX family. As to quaternary structure, homodimer. Probably interacts with PlsY.

The protein resides in the cytoplasm. It carries out the reaction a fatty acyl-[ACP] + phosphate = an acyl phosphate + holo-[ACP]. Its pathway is lipid metabolism; phospholipid metabolism. In terms of biological role, catalyzes the reversible formation of acyl-phosphate (acyl-PO(4)) from acyl-[acyl-carrier-protein] (acyl-ACP). This enzyme utilizes acyl-ACP as fatty acyl donor, but not acyl-CoA. The polypeptide is Phosphate acyltransferase (Pseudomonas syringae pv. syringae (strain B728a)).